The sequence spans 591 residues: Probable lysosomal cobalamin transporter (591 aa).

A run of 5 helical transmembrane segments spans residues 8–28 (LIWVAYAVAVAILFLIASTFV), 39–59 (AAVTIVCIFTTLALLATVLLI), 95–115 (IVYYTLYSLDAVLCLLVIPFT), 144–164 (WTLGFLIFVVAIFLVGFFVPF), and 198–218 (FLITVGTVLFVLYTGAGMALL). Positions 238 to 266 (TASQLETNRERQRQLEGRNEGREGGLDSR) are disordered. Residues 244–266 (TNRERQRQLEGRNEGREGGLDSR) show a composition bias toward basic and acidic residues. The next 4 helical transmembrane spans lie at 315-335 (LIGGLILLVFALVIFASMLIT), 378-398 (VLFLLLVLFLFSASVVGIATA), 422-442 (MATVLLTLITLAINYSVAMVV), and 509-529 (FFGIVLFWAQFAFLGVYLIVF).

Belongs to the LIMR family. LMBRD1 subfamily.

Its subcellular location is the lysosome membrane. In terms of biological role, probable lysosomal cobalamin transporter. Required to export cobalamin from lysosomes allowing its conversion to cofactors. This is Probable lysosomal cobalamin transporter from Pyrenophora tritici-repentis (strain Pt-1C-BFP) (Wheat tan spot fungus).